The chain runs to 149 residues: NADH-ubiquinone oxidoreductase chain 6 (149 aa).

4 helical membrane-spanning segments follow: residues 23–43 (ILML…FYFI), 51–71 (MMMI…MISL), 83–103 (LSVT…MTKL), and 114–134 (VNFV…LTII).

This sequence belongs to the complex I subunit 6 family.

The protein resides in the mitochondrion membrane. It catalyses the reaction a ubiquinone + NADH + 5 H(+)(in) = a ubiquinol + NAD(+) + 4 H(+)(out). In terms of biological role, core subunit of the mitochondrial membrane respiratory chain NADH dehydrogenase (Complex I) that is believed to belong to the minimal assembly required for catalysis. Complex I functions in the transfer of electrons from NADH to the respiratory chain. The immediate electron acceptor for the enzyme is believed to be ubiquinone. The polypeptide is NADH-ubiquinone oxidoreductase chain 6 (ND6) (Rhipicephalus sanguineus (Brown dog tick)).